A 68-amino-acid chain; its full sequence is Protein transport protein Sec61 gamma-1 subunit (68 aa).

Residues 1–32 lie on the Cytoplasmic side of the membrane; it reads MDKVVKFAEPGRAFAKDSIRLVKRCTKPDRKE. A helical membrane pass occupies residues 33–61; it reads FQKIAIATAVGFAIMGFIGFFVKLIHIPI. The Extracellular portion of the chain corresponds to 62-68; that stretch reads NNIIVGS.

It belongs to the SecE/SEC61-gamma family. In terms of assembly, heterotrimeric complex composed of SEC61-alpha, SEC61-beta and SEC61-gamma.

It is found in the endoplasmic reticulum membrane. In terms of biological role, necessary for protein translocation in the endoplasmic reticulum. In Drosophila melanogaster (Fruit fly), this protein is Protein transport protein Sec61 gamma-1 subunit (SEC61G1).